The primary structure comprises 177 residues: MSRVGKMPITIPAGVDVSIKEDQISVKGTGGTLNLARNPLVKVVSNDGKLNFEPANESREANAMSGTIRQLVNNMVVGVTKGFEKKLNLVGVGYKAAASNNKLNLQVGYSHPVNIDMPQGITVATATPTEIVIKGADRQRVGQIAAEIRAVRPPEPYKGKGIRYSDEKIVIKETKKK.

The protein belongs to the universal ribosomal protein uL6 family. In terms of assembly, part of the 50S ribosomal subunit.

Functionally, this protein binds to the 23S rRNA, and is important in its secondary structure. It is located near the subunit interface in the base of the L7/L12 stalk, and near the tRNA binding site of the peptidyltransferase center. The sequence is that of Large ribosomal subunit protein uL6 from Variovorax paradoxus (strain S110).